A 638-amino-acid polypeptide reads, in one-letter code: 2-isopropylmalate synthase (638 aa).

Residues 72 to 346 (PRWCSVDLRD…DPQLDLSNVP (275 aa)) enclose the Pyruvate carboxyltransferase domain. Asp81, His285, His287, and Asn321 together coordinate Mg(2+). A regulatory domain region spans residues 488–638 (VEQSGMTAAG…SAINRSQRQR (151 aa)).

Belongs to the alpha-IPM synthase/homocitrate synthase family. LeuA type 2 subfamily. As to quaternary structure, homodimer. It depends on Mg(2+) as a cofactor.

The protein resides in the cytoplasm. The enzyme catalyses 3-methyl-2-oxobutanoate + acetyl-CoA + H2O = (2S)-2-isopropylmalate + CoA + H(+). The protein operates within amino-acid biosynthesis; L-leucine biosynthesis; L-leucine from 3-methyl-2-oxobutanoate: step 1/4. Functionally, catalyzes the condensation of the acetyl group of acetyl-CoA with 3-methyl-2-oxobutanoate (2-ketoisovalerate) to form 3-carboxy-3-hydroxy-4-methylpentanoate (2-isopropylmalate). The sequence is that of 2-isopropylmalate synthase from Bifidobacterium longum subsp. infantis (strain ATCC 15697 / DSM 20088 / JCM 1222 / NCTC 11817 / S12).